Here is a 431-residue protein sequence, read N- to C-terminus: Hemagglutinin-esterase (431 aa).

An N-terminal signal peptide occupies residues 1-21 (MARTDAMAPRTLLLVLSLGYA). Residues 11–131 (TLLLVLSLGY…DNNRWMGNKA (121 aa)) are esterase domain 1. Topologically, residues 22–399 (FGFNEPLNVV…PVCMYDPLPV (378 aa)) are virion surface. S44 (nucleophile) is an active-site residue. An intrachain disulfide couples C48 to C69. N53, N93, N151, N157, N199, N244, N248, and N309 each carry an N-linked (GlcNAc...) asparagine; by host glycan. C117 and C166 are disulfide-bonded. The interval 132-274 (RFYTQLYQKM…GNYISISNEL (143 aa)) is receptor binding. Disulfide bonds link C205–C284 and C213–C257. Residues 275–387 (LLTVPSKAIC…HCPTAANIVF (113 aa)) form an esterase domain 2 region. C315 and C320 are oxidised to a cystine. Residue N324 is glycosylated (N-linked (GlcNAc...) asparagine; by host). Residues D334 and H337 each act as charge relay system in the active site. N-linked (GlcNAc...) asparagine; by host glycans are attached at residues N352 and N366. C355 and C379 are joined by a disulfide. Residues 400 to 420 (ILLGVLLGIAVLIIVFLMFYF) traverse the membrane as a helical segment. Over 421–431 (MTDSGVRLHEA) the chain is Intravirion.

Belongs to the influenza type C/coronaviruses hemagglutinin-esterase family. Homodimer; disulfide-linked. Forms a complex with the M protein in the pre-Golgi. Associates then with S-M complex to form a ternary complex S-M-HE. In terms of processing, N-glycosylated in the host RER.

The protein localises to the virion membrane. It is found in the host cell membrane. The catalysed reaction is N-acetyl-9-O-acetylneuraminate + H2O = N-acetylneuraminate + acetate + H(+). The enzyme catalyses N-acetyl-4-O-acetylneuraminate + H2O = N-acetylneuraminate + acetate + H(+). Its function is as follows. Structural protein that makes short spikes at the surface of the virus. Contains receptor binding and receptor-destroying activities. Mediates de-O-acetylation of N-acetyl-4-O-acetylneuraminic acid, which is probably the receptor determinant recognized by the virus on the surface of erythrocytes and susceptible cells. This receptor-destroying activity is important for virus release as it probably helps preventing self-aggregation and ensures the efficient spread of the progeny virus from cell to cell. May serve as a secondary viral attachment protein for initiating infection, the spike protein being the major one. May become a target for both the humoral and the cellular branches of the immune system. The chain is Hemagglutinin-esterase from Murine coronavirus (strain DVIM) (MHV-DVIM).